A 151-amino-acid chain; its full sequence is UPF0178 protein PMI1258 (151 aa).

Belongs to the UPF0178 family.

This is UPF0178 protein PMI1258 from Proteus mirabilis (strain HI4320).